The following is a 324-amino-acid chain: Sperm acrosome membrane-associated protein 6 (324 aa).

Positions 1-26 are cleaved as a signal peptide; that stretch reads MALLALASAVPSALLALAVFRVPAWA. Positions 27–30 match the CXXC motif motif; the sequence is CLLC. Intrachain disulfides connect Cys27-Cys139, Cys30-Cys142, Cys41-Cys55, Cys124-Cys147, Cys128-Cys153, and Cys170-Cys226. Topologically, residues 27 to 295 are extracellular; that stretch reads CLLCFTTYSE…RPEALTPSNL (269 aa). The CXXC motif signature appears at 139 to 142; the sequence is CSGC. In terms of domain architecture, Ig-like spans 150–236; it reads PLDCPVQDVT…VIKQDQRPLA (87 aa). Asn243 carries an N-linked (GlcNAc...) asparagine glycan. Residues 296–316 traverse the membrane as a helical segment; it reads FLLAVLGALASASATVLAWMF. Over 317 to 324 the chain is Cytoplasmic; the sequence is FRWYCSGN.

Belongs to the SPACA6 family. In terms of assembly, forms a complex with IZUMO1 and TMEM81 on spermatocyte cell membrane required for fertilization. Detected at the sperm head, equatorial region, neck and midpiece (at protein level). Expressed in testis.

It is found in the cytoplasmic vesicle. Its subcellular location is the secretory vesicle. The protein resides in the acrosome membrane. Its function is as follows. Sperm protein required for fusion of sperm with the egg membrane during fertilization. May regulate the expression of sperm surface protein DCST2. The polypeptide is Sperm acrosome membrane-associated protein 6 (Homo sapiens (Human)).